Consider the following 410-residue polypeptide: Indoleamine 2,3-dioxygenase nanC (410 aa).

Residue H309 coordinates heme.

This sequence belongs to the indoleamine 2,3-dioxygenase family. It depends on heme as a cofactor.

The catalysed reaction is D-tryptophan + O2 = N-formyl-D-kynurenine. It carries out the reaction L-tryptophan + O2 = N-formyl-L-kynurenine. Its pathway is secondary metabolite biosynthesis. Its function is as follows. Indoleamine 2,3-dioxygenase; part of the gene cluster that mediates the biosynthesis of the benzazepine alkaloid nanangelenin A which contains an unprecedented 3,4-dihydro-1-benzazepine-2,5-dione-N-prenyl-N-acetoxy-anthranilamide scaffold. The first step of nanangelenin biosynthesis is catalyzed by the indoleamine 2,3-dioxygenase nanC which produces N-formyl-kynurenine through the catabolism of tryptophan. The two-module NRPS nanA then utilizes anthranilate (Ant) and L-kynurenine (L-Kyn) to assemble the dipeptide product nanangelenin B. The first adenylation domain of nanA (A1) loads anthranilate onto the T1 domain, while A2 loads kynurenine, generated through spontaneous nonenzymatic deformylation of the nanC-supplied N-formyl-kynurenine. The peptide bond formation between the tethered amino acids is catalyzed by the first condensation domain (C1) between anthranilate's carbonyl carbon and kynurenine's aliphatic primary amine. The second C domain (C2) catalyzes the final cyclization event between the aromatic amine of kynurenine and the tethered carbonyl carbon, yielding nanangelenin B. The terminal T3 domain enhances the catalytic efficiency of C2, suggesting the T2-tethered Ant-L-Kyn is transferred to T3 prior to cyclization by C2. Once released from nanA, nanangelenin B is then prenylated by the prenyltransferase nanD to form nanangelenin C. Nanangelenin C is then N-hydroxylated by the FAD-dependent monooxygenase nanF and further acetylated by the acetyltransferase nanB to yield nanangelenin F. Finally, the N-methyltransferase nanE methylates the amide nitrogen of 1-benzazepine to convert nanangelenin F into nanangelenin A. NanE is also able to methylate most of the intermediates of the pathway such as nanangelenin B and nanangelenin C to produce nanangelenin D and nanangelenin E, respectively. The protein is Indoleamine 2,3-dioxygenase nanC of Aspergillus nanangensis.